The chain runs to 308 residues: Ribonuclease Z (308 aa).

His61, His63, Asp65, His66, His139, Asp210, and His268 together coordinate Zn(2+). The active-site Proton acceptor is Asp65.

The protein belongs to the RNase Z family. Homodimer. The cofactor is Zn(2+).

It catalyses the reaction Endonucleolytic cleavage of RNA, removing extra 3' nucleotides from tRNA precursor, generating 3' termini of tRNAs. A 3'-hydroxy group is left at the tRNA terminus and a 5'-phosphoryl group is left at the trailer molecule.. In terms of biological role, zinc phosphodiesterase, which displays some tRNA 3'-processing endonuclease activity. Probably involved in tRNA maturation, by removing a 3'-trailer from precursor tRNA. The polypeptide is Ribonuclease Z (Natronomonas pharaonis (strain ATCC 35678 / DSM 2160 / CIP 103997 / JCM 8858 / NBRC 14720 / NCIMB 2260 / Gabara) (Halobacterium pharaonis)).